We begin with the raw amino-acid sequence, 190 residues long: Elongation factor P-like protein (190 aa).

It belongs to the elongation factor P family.

In Proteus mirabilis (strain HI4320), this protein is Elongation factor P-like protein.